The primary structure comprises 187 residues: UPF0301 protein ESA_00394 (187 aa).

This sequence belongs to the UPF0301 (AlgH) family.

In Cronobacter sakazakii (strain ATCC BAA-894) (Enterobacter sakazakii), this protein is UPF0301 protein ESA_00394.